Consider the following 1113-residue polypeptide: Protein translocase subunit SecA (1113 aa).

ATP contacts are provided by residues Gln175, 193 to 197 (GEGKT), and Asp694. Basic and acidic residues predominate over residues 1042-1072 (RHAAEQRTDMSKYRTQKDDIEAQQKAQRDAA). Residues 1042 to 1113 (RHAAEQRTDM…KFKQCHGRNL (72 aa)) are disordered. Zn(2+) is bound by residues Cys1097, Cys1099, Cys1108, and His1109. Over residues 1103-1113 (KKFKQCHGRNL) the composition is skewed to basic residues.

Belongs to the SecA family. Monomer and homodimer. Part of the essential Sec protein translocation apparatus which comprises SecA, SecYEG and auxiliary proteins SecDF. Other proteins may also be involved. The cofactor is Zn(2+).

Its subcellular location is the cell inner membrane. It is found in the cytoplasm. It carries out the reaction ATP + H2O + cellular proteinSide 1 = ADP + phosphate + cellular proteinSide 2.. Part of the Sec protein translocase complex. Interacts with the SecYEG preprotein conducting channel. Has a central role in coupling the hydrolysis of ATP to the transfer of proteins into and across the cell membrane, serving as an ATP-driven molecular motor driving the stepwise translocation of polypeptide chains across the membrane. This is Protein translocase subunit SecA from Porphyromonas gingivalis (strain ATCC 33277 / DSM 20709 / CIP 103683 / JCM 12257 / NCTC 11834 / 2561).